A 312-amino-acid chain; its full sequence is L-lactate dehydrogenase (312 aa).

3 residues coordinate NAD(+): Val-14, Asp-35, and Tyr-66. Substrate-binding residues include Gln-83 and Arg-90. Residues Ser-103, 120–122 (ASN), and Ser-145 each bind NAD(+). Residue 122-125 (NPVD) participates in substrate binding. Substrate is bound at residue 150-153 (DSAR). His-177 acts as the Proton acceptor in catalysis. Tyr-220 is modified (phosphotyrosine). Thr-229 serves as a coordination point for substrate.

This sequence belongs to the LDH/MDH superfamily. LDH family. In terms of assembly, homotetramer.

It is found in the cytoplasm. The enzyme catalyses (S)-lactate + NAD(+) = pyruvate + NADH + H(+). Its pathway is fermentation; pyruvate fermentation to lactate; (S)-lactate from pyruvate: step 1/1. Its function is as follows. Catalyzes the conversion of lactate to pyruvate. The protein is L-lactate dehydrogenase of Mycoplasma genitalium (strain ATCC 33530 / DSM 19775 / NCTC 10195 / G37) (Mycoplasmoides genitalium).